Consider the following 314-residue polypeptide: Acetyl-coenzyme A carboxylase carboxyl transferase subunit alpha (314 aa).

The CoA carboxyltransferase C-terminal domain maps to 38–292 (RLERKSAALL…ANAIDEELDA (255 aa)).

Belongs to the AccA family. Acetyl-CoA carboxylase is a heterohexamer composed of biotin carboxyl carrier protein (AccB), biotin carboxylase (AccC) and two subunits each of ACCase subunit alpha (AccA) and ACCase subunit beta (AccD).

Its subcellular location is the cytoplasm. It catalyses the reaction N(6)-carboxybiotinyl-L-lysyl-[protein] + acetyl-CoA = N(6)-biotinyl-L-lysyl-[protein] + malonyl-CoA. It functions in the pathway lipid metabolism; malonyl-CoA biosynthesis; malonyl-CoA from acetyl-CoA: step 1/1. Component of the acetyl coenzyme A carboxylase (ACC) complex. First, biotin carboxylase catalyzes the carboxylation of biotin on its carrier protein (BCCP) and then the CO(2) group is transferred by the carboxyltransferase to acetyl-CoA to form malonyl-CoA. In Erythrobacter litoralis (strain HTCC2594), this protein is Acetyl-coenzyme A carboxylase carboxyl transferase subunit alpha.